Consider the following 334-residue polypeptide: Holliday junction branch migration complex subunit RuvB (334 aa).

The segment at 1–182 (MDERLVSSEA…FGVLSRLEYY (182 aa)) is large ATPase domain (RuvB-L). Residues leucine 21, arginine 22, glycine 63, lysine 66, threonine 67, threonine 68, 129–131 (EDF), arginine 172, tyrosine 182, and arginine 219 each bind ATP. Threonine 67 contacts Mg(2+). Positions 183 to 253 (TQEELTDIVS…IAHDALERLQ (71 aa)) are small ATPAse domain (RuvB-S). The interval 256–334 (ALGLDHIDHK…HFRLEAPARD (79 aa)) is head domain (RuvB-H). DNA is bound by residues arginine 311 and arginine 316.

Belongs to the RuvB family. As to quaternary structure, homohexamer. Forms an RuvA(8)-RuvB(12)-Holliday junction (HJ) complex. HJ DNA is sandwiched between 2 RuvA tetramers; dsDNA enters through RuvA and exits via RuvB. An RuvB hexamer assembles on each DNA strand where it exits the tetramer. Each RuvB hexamer is contacted by two RuvA subunits (via domain III) on 2 adjacent RuvB subunits; this complex drives branch migration. In the full resolvosome a probable DNA-RuvA(4)-RuvB(12)-RuvC(2) complex forms which resolves the HJ.

It is found in the cytoplasm. It catalyses the reaction ATP + H2O = ADP + phosphate + H(+). Its function is as follows. The RuvA-RuvB-RuvC complex processes Holliday junction (HJ) DNA during genetic recombination and DNA repair, while the RuvA-RuvB complex plays an important role in the rescue of blocked DNA replication forks via replication fork reversal (RFR). RuvA specifically binds to HJ cruciform DNA, conferring on it an open structure. The RuvB hexamer acts as an ATP-dependent pump, pulling dsDNA into and through the RuvAB complex. RuvB forms 2 homohexamers on either side of HJ DNA bound by 1 or 2 RuvA tetramers; 4 subunits per hexamer contact DNA at a time. Coordinated motions by a converter formed by DNA-disengaged RuvB subunits stimulates ATP hydrolysis and nucleotide exchange. Immobilization of the converter enables RuvB to convert the ATP-contained energy into a lever motion, pulling 2 nucleotides of DNA out of the RuvA tetramer per ATP hydrolyzed, thus driving DNA branch migration. The RuvB motors rotate together with the DNA substrate, which together with the progressing nucleotide cycle form the mechanistic basis for DNA recombination by continuous HJ branch migration. Branch migration allows RuvC to scan DNA until it finds its consensus sequence, where it cleaves and resolves cruciform DNA. This chain is Holliday junction branch migration complex subunit RuvB, found in Bacillus velezensis (strain DSM 23117 / BGSC 10A6 / LMG 26770 / FZB42) (Bacillus amyloliquefaciens subsp. plantarum).